The following is a 267-amino-acid chain: L-aspartate dehydrogenase (267 aa).

Residues Ala124 and Asn190 each contribute to the NAD(+) site. Residue His218 is part of the active site.

This sequence belongs to the L-aspartate dehydrogenase family.

The catalysed reaction is L-aspartate + NADP(+) + H2O = oxaloacetate + NH4(+) + NADPH + H(+). It carries out the reaction L-aspartate + NAD(+) + H2O = oxaloacetate + NH4(+) + NADH + H(+). It functions in the pathway cofactor biosynthesis; NAD(+) biosynthesis; iminoaspartate from L-aspartate (dehydrogenase route): step 1/1. Its function is as follows. Specifically catalyzes the NAD or NADP-dependent dehydrogenation of L-aspartate to iminoaspartate. This chain is L-aspartate dehydrogenase, found in Methanococcus maripaludis (strain DSM 14266 / JCM 13030 / NBRC 101832 / S2 / LL).